The chain runs to 462 residues: Squalene synthase LSS (462 aa).

NADP(+)-binding residues include Arg48 and Arg73. Mg(2+) contacts are provided by Asp76, Glu79, and Asp80. Positions 214, 314, and 316 each coordinate NADP(+). The next 2 membrane-spanning stretches (helical) occupy residues 399–419 (LVLV…PLLW) and 436–456 (LGLP…YQVF).

The protein belongs to the phytoene/squalene synthase family. It depends on Mg(2+) as a cofactor.

Its subcellular location is the membrane. It carries out the reaction 2 (2E,6E)-farnesyl diphosphate + NADH + H(+) = squalene + 2 diphosphate + NAD(+). It catalyses the reaction 2 (2E,6E)-farnesyl diphosphate + NADPH + H(+) = squalene + 2 diphosphate + NADP(+). Its function is as follows. Converts farnesyl diphosphate (FPP) into squalene, a precursor for sterol biosynthesis in eukaryotes. This Botryococcus braunii (Green alga) protein is Squalene synthase LSS.